The primary structure comprises 791 residues: Ribosome biogenesis protein ERB1 (791 aa).

A compositionally biased stretch (polar residues) spans Met-1–Glu-12. Disordered regions lie at residues Met-1–Asp-60 and Ala-68–Gly-87. Acidic residues-rich tracts occupy residues Glu-25–Asp-60 and Glu-69–Gly-87. Positions Arg-254 to Ser-372 are required for interaction with NOP7. The tract at residues Ser-372 to Thr-408 is required for interaction with YTM1. WD repeat units lie at residues Gly-424–Gln-463, Asn-472–Glu-512, Thr-576–Pro-618, Lys-621–Lys-659, Pro-662–Lys-701, Tyr-705–Lys-744, and Val-760–Thr-791.

It belongs to the WD repeat BOP1/ERB1 family. Component of the NOP7 complex, composed of ERB1, NOP7 and YTM1. The complex is held together by ERB1, which interacts with NOP7 via its N-terminal domain and with YTM1 via a high-affinity interaction between the seven-bladed beta-propeller domains of the 2 proteins. The NOP7 complex associates with the 66S pre-ribosome.

It localises to the nucleus. Its subcellular location is the nucleolus. The protein resides in the nucleoplasm. Its function is as follows. Component of the NOP7 complex, which is required for maturation of the 25S and 5.8S ribosomal RNAs and formation of the 60S ribosome. This is Ribosome biogenesis protein ERB1 from Kluyveromyces lactis (strain ATCC 8585 / CBS 2359 / DSM 70799 / NBRC 1267 / NRRL Y-1140 / WM37) (Yeast).